We begin with the raw amino-acid sequence, 209 residues long: MSESREQEQALTLAVIMQSVQCIREVARTGDTETSRYEPLIEGLLGEYDGSTDALYGAARLAPGLRRVVEQLEDPQEADTTRYVASIFHLERRLMKRQAVLQRIAEGIEQARSQADYFENPAHTSVIRSVGDLYSQTISEMGPRLMIRGEQQHLENERNAALIRALLLCGIRGASLWRDNGGGRMTLLFRRQAIAGAARDLLEALPTEA.

The protein belongs to the HflD family.

The protein resides in the cytoplasm. It is found in the cell inner membrane. In Halorhodospira halophila (strain DSM 244 / SL1) (Ectothiorhodospira halophila (strain DSM 244 / SL1)), this protein is High frequency lysogenization protein HflD homolog.